Consider the following 1761-residue polypeptide: Nonribosomal peptide synthetase 6 (1761 aa).

An adenylation region spans residues 63–468 (ERAALHPEKI…GRQDQQVKLR (406 aa)). The Carrier 1 domain maps to 600-675 (EATTEMELKL…AMAEKAKPVS (76 aa)). O-(pantetheine 4'-phosphoryl)serine is present on S636. The tract at residues 712 to 1135 (VEDVYPCTPL…AVLDPAEARD (424 aa)) is condensation 1. Carrier domains are found at residues 1169 to 1242 (SPNE…SNER) and 1237 to 1313 (SASN…EEEM). O-(pantetheine 4'-phosphoryl)serine occurs at positions 1203 and 1274. A condensation 2 region spans residues 1354–1677 (IYPTRPLQQL…DKVQWFDTVV (324 aa)).

The protein belongs to the NRP synthetase family.

Its pathway is siderophore biosynthesis. NRPS involved in extracellular coprogen-type siderophores biosynthesis including coprogen, neocoprogen I and neocoprogen II. The role of extracellular siderophores in fungal virulence to plants is to supply iron to the fungus during plant infection, but not to act as phytotoxins, depriving their hosts of iron. The protein is Nonribosomal peptide synthetase 6 of Cochliobolus miyabeanus (Brown spot disease fungus).